Here is a 419-residue protein sequence, read N- to C-terminus: Methyltransferase/ribosomally synthesized type I borosin cyclic peptide precursor gjuMa (419 aa).

The methyltransferase domain stretch occupies residues 1 to 255 (MATPIATTTN…AISTLYVPPR (255 aa)). Residues Arg-79, Tyr-83, and Tyr-105 contribute to the active site. Residues Tyr-105, His-107, Val-110, Ala-137, Gln-179, Gly-217, Ser-248, and Thr-249 each coordinate S-adenosyl-L-methionine. Positions 256–381 (DISPVDPTMA…GAVYALMSRP (126 aa)) are clasp domain. The interval 382 to 404 (TGDIAREKELTNDEIANNHGAPY) is precursor leader. Position 408 is an N-methylserine (Ser-408). N-methylalanine is present on Ala-409. An N-methylvaline modification is found at Val-410. 2 positions are modified to N-methylisoleucine: Ile-411 and Ile-412. 2 positions are modified to N-methylalanine: Ala-413 and Ala-414. N-methylisoleucine occurs at positions 415 and 416.

It in the N-terminal section; belongs to the precorrin methyltransferase family. In terms of assembly, homodimer. In terms of processing, gjuMA automethylates at Ser-408, Ala-409, Val-410, Ile-411, Ile-412, Ala-413, Ala-414, Ile-415 and Ile-416 before being processed by ae prolyloligopeptidase which likely forms a peptidyl ester upon removal of the follower propeptide, which then undergoes macrocyclization with the N-terminus of the modified core peptide. Peptide backbone alpha-N-methylations change the physicochemical properties of amide bonds to provide structural constraints and other favorable characteristics including biological membrane permeability to peptides.

It participates in secondary metabolite biosynthesis. Fusion protein of the methyltransferase gjuM and the type I borosin core peptide; part of the gene cluster that mediates the biosynthesis of a type I borosin, a highly methylated cyclic peptide with potent biological activities. Type I borosins derive from the C-terminus of the fusion protein, and it is the same protein that methylates its own C-terminus using S-adenosyl methionine (SAM). The C-terminus is subsequently cleaved off and macrocyclized by a prolyloligopeptidase to give the final product. The polypeptide is Methyltransferase/ribosomally synthesized type I borosin cyclic peptide precursor gjuMa (Gymnopilus junonius (Spectacular rustgill mushroom)).